The primary structure comprises 1171 residues: DNA-directed RNA polymerase subunit beta' (1171 aa).

Residues C60, C62, C75, and C78 each contribute to the Zn(2+) site. The tract at residues 299–319 (GRRGKPVTGPGNRPLKSLSDM) is disordered. Mg(2+) is bound by residues D449, D451, and D453. Residues C790, C864, C871, and C874 each contribute to the Zn(2+) site.

Belongs to the RNA polymerase beta' chain family. In terms of assembly, the RNAP catalytic core consists of 2 alpha, 1 beta, 1 beta' and 1 omega subunit. When a sigma factor is associated with the core the holoenzyme is formed, which can initiate transcription. It depends on Mg(2+) as a cofactor. The cofactor is Zn(2+).

It catalyses the reaction RNA(n) + a ribonucleoside 5'-triphosphate = RNA(n+1) + diphosphate. Its function is as follows. DNA-dependent RNA polymerase catalyzes the transcription of DNA into RNA using the four ribonucleoside triphosphates as substrates. The polypeptide is DNA-directed RNA polymerase subunit beta' (Alkaliphilus metalliredigens (strain QYMF)).